A 142-amino-acid chain; its full sequence is Large ribosomal subunit protein uL11 (142 aa).

Belongs to the universal ribosomal protein uL11 family. In terms of assembly, part of the ribosomal stalk of the 50S ribosomal subunit. Interacts with L10 and the large rRNA to form the base of the stalk. L10 forms an elongated spine to which L12 dimers bind in a sequential fashion forming a multimeric L10(L12)X complex. In terms of processing, one or more lysine residues are methylated.

In terms of biological role, forms part of the ribosomal stalk which helps the ribosome interact with GTP-bound translation factors. The sequence is that of Large ribosomal subunit protein uL11 from Acidithiobacillus ferrooxidans (strain ATCC 23270 / DSM 14882 / CIP 104768 / NCIMB 8455) (Ferrobacillus ferrooxidans (strain ATCC 23270)).